A 106-amino-acid chain; its full sequence is Protein S40-3 (106 aa).

The tract at residues 1–65 (MSEEFQESEV…TEEEGEMTPP (65 aa)) is disordered. Basic and acidic residues predominate over residues 16 to 41 (SFTRKDNKISHNNENYERKSTEKDKI).

It belongs to the senescence regulator S40 family.

Its subcellular location is the nucleus. In terms of biological role, regulates senescence either by modulating WRKY53 or by activating SAG12. Affects the natural variation of cyst nematodes sex ratio and susceptibility to parasitic nematodes, depending on single nucleotide polymorphism (SNPs) between cultivars. The chain is Protein S40-3 from Arabidopsis thaliana (Mouse-ear cress).